Here is a 1634-residue protein sequence, read N- to C-terminus: Phosphatidylinositol 4-phosphate 3-kinase C2 domain-containing subunit beta (1634 aa).

The segment at 2–298 (SSTQGNGEHW…YASRYGNRKN (297 aa)) is interaction with GRB2. Disordered stretches follow at residues 45–188 (EENR…QPSD) and 259–315 (GRGP…VGSR). A compositionally biased stretch (polar residues) spans 87 to 112 (SDPTLNYNSLSPQEGPPNHSTSQGPQ). Over residues 176 to 187 (GSPSSSKISQPS) the composition is skewed to low complexity. Basic and acidic residues predominate over residues 259 to 270 (GRGPLDFSKDTS). In terms of domain architecture, PI3K-RBD spans 375 to 463 (EVNLKVTVLC…DIDIRLQLME (89 aa)). The C2 PI3K-type domain occupies 635–786 (VYATHRIPII…DSVILQIDFP (152 aa)). One can recognise a PIK helical domain in the interval 805–981 (RYEFGSLREE…QYLLAALLCC (177 aa)). In terms of domain architecture, PI3K/PI4K catalytic spans 1050–1328 (VPRDCSYFNS…LIESSLGSVA (279 aa)). The interval 1056-1062 (YFNSNAV) is G-loop. The catalytic loop stretch occupies residues 1192–1200 (GICDRHNDN). Residues 1211-1237 (HIDFGRFLGHAQMFGNIKRDRAPFVFT) are activation loop. The PX domain occupies 1365–1481 (GRISDVFLCR…TFFHPLPRDE (117 aa)). In terms of domain architecture, C2 spans 1504-1624 (VGGEVKLSIS…DLAQEKTGWF (121 aa)).

It belongs to the PI3/PI4-kinase family. In terms of assembly, part of a complex with ERBB2 and EGFR. Part of a complex with phosphorylated EGFR and GRB2. Interacts with phosphorylated EGFR and PDGFR, maybe indirectly. Interacts with GRB2. Ca(2+) is required as a cofactor. Mg(2+) serves as cofactor. It depends on Mn(2+) as a cofactor. In terms of tissue distribution, expressed in columnar and transitional epithelia, mononuclear cells, and ganglion cells (at protein level). Widely expressed, with highest levels in thymus and placenta and lowest in peripheral blood, skeletal muscle and kidney.

The protein localises to the microsome. It localises to the cell membrane. Its subcellular location is the cytoplasm. It is found in the cytosol. The protein resides in the nucleus. The protein localises to the endoplasmic reticulum. It carries out the reaction a 1,2-diacyl-sn-glycero-3-phospho-(1D-myo-inositol 4-phosphate) + ATP = a 1,2-diacyl-sn-glycero-3-phospho-(1D-myo-inositol-3,4-bisphosphate) + ADP + H(+). It catalyses the reaction a 1,2-diacyl-sn-glycero-3-phospho-(1D-myo-inositol) + ATP = a 1,2-diacyl-sn-glycero-3-phospho-(1D-myo-inositol-3-phosphate) + ADP + H(+). Its activity is regulated as follows. Activated by GRB2. Its function is as follows. Phosphorylates PtdIns and PtdIns4P with a preference for PtdIns. Does not phosphorylate PtdIns(4,5)P2. May be involved in EGF and PDGF signaling cascades. The polypeptide is Phosphatidylinositol 4-phosphate 3-kinase C2 domain-containing subunit beta (PIK3C2B) (Homo sapiens (Human)).